The chain runs to 179 residues: Bifunctional protein PyrR (179 aa).

A PRPP-binding motif is present at residues 100–112 (VILVDDVLFTGRT).

This sequence belongs to the purine/pyrimidine phosphoribosyltransferase family. PyrR subfamily. In terms of assembly, homodimer and homohexamer; in equilibrium.

The catalysed reaction is UMP + diphosphate = 5-phospho-alpha-D-ribose 1-diphosphate + uracil. Its function is as follows. Regulates transcriptional attenuation of the pyrimidine nucleotide (pyr) operon by binding in a uridine-dependent manner to specific sites on pyr mRNA. This disrupts an antiterminator hairpin in the RNA and favors formation of a downstream transcription terminator, leading to a reduced expression of downstream genes. Also displays a weak uracil phosphoribosyltransferase activity which is not physiologically significant. The chain is Bifunctional protein PyrR from Geobacillus sp. (strain WCH70).